Reading from the N-terminus, the 248-residue chain is Probable transcriptional regulatory protein R02753 (248 aa).

It belongs to the TACO1 family.

The protein resides in the cytoplasm. The sequence is that of Probable transcriptional regulatory protein R02753 from Rhizobium meliloti (strain 1021) (Ensifer meliloti).